A 152-amino-acid polypeptide reads, in one-letter code: Probable flagellum biosynthesis repressor protein FlbT (152 aa).

It belongs to the FlbT family.

Has a post-transcriptional repressor function in flagellum biogenesis. Associates with the 5'-UTR of fljK mRNA and promotes its degradation. The sequence is that of Probable flagellum biosynthesis repressor protein FlbT from Brucella anthropi (strain ATCC 49188 / DSM 6882 / CCUG 24695 / JCM 21032 / LMG 3331 / NBRC 15819 / NCTC 12168 / Alc 37) (Ochrobactrum anthropi).